The primary structure comprises 82 residues: MAHKKGASSSRNGRDSNAKRLGVKRFAGQVVSAGEILVRQRGTRFHPGTNVRRGDDDTLFALASGRVRFGRSGKRRAVSVDT.

Residues 1–21 (MAHKKGASSSRNGRDSNAKRL) are disordered.

This sequence belongs to the bacterial ribosomal protein bL27 family.

The chain is Large ribosomal subunit protein bL27 from Tropheryma whipplei (strain Twist) (Whipple's bacillus).